A 546-amino-acid polypeptide reads, in one-letter code: CTP synthase (546 aa).

Residues Met1–Ile265 are amidoligase domain. Ser13 is a CTP binding site. Position 13 (Ser13) interacts with UTP. ATP contacts are provided by residues Ser14–Ile19 and Asp71. Asp71 and Glu139 together coordinate Mg(2+). CTP contacts are provided by residues Asp146–Glu148, Lys186–Gln191, and Lys222. UTP contacts are provided by residues Lys186–Gln191 and Lys222. Residues Asp290 to Ala543 form the Glutamine amidotransferase type-1 domain. An L-glutamine-binding site is contributed by Gly351. The Nucleophile; for glutamine hydrolysis role is filled by Cys378. L-glutamine contacts are provided by residues Leu379 to Gln382, Glu402, and Arg469. Catalysis depends on residues His516 and Glu518.

This sequence belongs to the CTP synthase family. Homotetramer.

The catalysed reaction is UTP + L-glutamine + ATP + H2O = CTP + L-glutamate + ADP + phosphate + 2 H(+). It catalyses the reaction L-glutamine + H2O = L-glutamate + NH4(+). It carries out the reaction UTP + NH4(+) + ATP = CTP + ADP + phosphate + 2 H(+). The protein operates within pyrimidine metabolism; CTP biosynthesis via de novo pathway; CTP from UDP: step 2/2. With respect to regulation, allosterically activated by GTP, when glutamine is the substrate; GTP has no effect on the reaction when ammonia is the substrate. The allosteric effector GTP functions by stabilizing the protein conformation that binds the tetrahedral intermediate(s) formed during glutamine hydrolysis. Inhibited by the product CTP, via allosteric rather than competitive inhibition. Its function is as follows. Catalyzes the ATP-dependent amination of UTP to CTP with either L-glutamine or ammonia as the source of nitrogen. Regulates intracellular CTP levels through interactions with the four ribonucleotide triphosphates. This chain is CTP synthase, found in Azoarcus sp. (strain BH72).